An 83-amino-acid polypeptide reads, in one-letter code: Large ribosomal subunit protein bL27c (83 aa).

The interval 1 to 24 (MAHKKGAGSTKNGRDSNAKRLGVK) is disordered.

It belongs to the bacterial ribosomal protein bL27 family.

Its subcellular location is the plastid. The protein resides in the chloroplast. The sequence is that of Large ribosomal subunit protein bL27c (rpl27) from Trieres chinensis (Marine centric diatom).